The following is a 462-amino-acid chain: Calcitonin gene-related peptide type 1 receptor (462 aa).

A signal peptide spans M1–A22. Topologically, residues E23–L140 are extracellular. Intrachain disulfides connect C49/C75, C66/C106, and C89/C128. N67, N119, and N124 each carry an N-linked (GlcNAc...) asparagine glycan. Residues N141 to F165 traverse the membrane as a helical segment. Over Y166–T176 the chain is Cytoplasmic. The helical transmembrane segment at L177–V199 threads the bilayer. The Extracellular portion of the chain corresponds to A200–P210. The helical transmembrane segment at V211–H239 threads the bilayer. Topologically, residues T240 to L253 are cytoplasmic. A helical membrane pass occupies residues M254–A274. Over R275–H290 the chain is Extracellular. Residues T289–H290 are required for RAMP3 interaction. The helical transmembrane segment at L291–R315 threads the bilayer. The Cytoplasmic portion of the chain corresponds to V316 to N330. A helical membrane pass occupies residues L331–L352. The Extracellular segment spans residues I353 to D367. The chain crosses the membrane as a helical span at residues Y368–F388. At N389–D462 the chain is on the cytoplasmic side. Phosphoserine is present on residues S421 and S446.

It belongs to the G-protein coupled receptor 2 family. In terms of assembly, heterodimer of CALCRL and RAMP1; the receptor complex functions as CGRP receptor. Heterodimer of CALCRL and RAMP2 or CALCRL and RAMP3; the complexes function as adrenomedullin receptor. In terms of tissue distribution, detected in lung and coronary artery.

Its subcellular location is the cell membrane. Its function is as follows. G protein-coupled receptor which specificity is determined by its interaction with receptor-activity-modifying proteins (RAMPs). Together with RAMP1, form the receptor complex for calcitonin-gene-related peptides CALCA/CGRP1 and CALCB/CGRP2. Together with RAMP2 or RAMP3, function as receptor complexes for adrenomedullin (ADM and ADM2). Ligand binding causes a conformation change that triggers signaling via guanine nucleotide-binding proteins (G proteins) and modulates the activity of downstream effectors. Activates cAMP-dependent pathway. This Sus scrofa (Pig) protein is Calcitonin gene-related peptide type 1 receptor (CALCRL).